The primary structure comprises 275 residues: Tryptase (275 aa).

Positions 1–20 (MLNLLVLALPLLVSLVHTAP) are cleaved as a signal peptide. A propeptide spans 21–30 (APGQALERAG) (activation peptide). Residues 31–272 (IVGGKEAPGH…YLDWIHQCIP (242 aa)) enclose the Peptidase S1 domain. An intrachain disulfide couples cysteine 59 to cysteine 75. Catalysis depends on charge relay system residues histidine 74 and aspartate 121. A glycan (N-linked (GlcNAc...) asparagine) is linked at asparagine 132. 3 disulfide bridges follow: cysteine 155–cysteine 230, cysteine 188–cysteine 211, and cysteine 220–cysteine 248. Serine 224 acts as the Charge relay system in catalysis. Asparagine 233 carries an N-linked (GlcNAc...) asparagine glycan.

Belongs to the peptidase S1 family. Tryptase subfamily. Homotetramer.

The protein resides in the secreted. The enzyme catalyses Preferential cleavage: Arg-|-Xaa, Lys-|-Xaa, but with more restricted specificity than trypsin.. Functionally, tryptase is the major neutral protease present in mast cells and is secreted upon the coupled activation-degranulation response of this cell type. In Sus scrofa (Pig), this protein is Tryptase (MCT7).